The primary structure comprises 677 residues: Protein windpipe (677 aa).

An N-terminal signal peptide occupies residues 1 to 20 (MERVHLTAWLALFLIVVANA). Topologically, residues 21 to 451 (TPTPARTPTG…IGKPKDDSSA (431 aa)) are extracellular. N53 and N80 each carry an N-linked (GlcNAc...) asparagine glycan. 4 LRR repeats span residues 91–116 (LPELTSADLSHNQLKDLGHLGKGLKR), 118–133 (NLKHNQLTSDKLRKLP), 134–156 (QHLQVLNLQHNNITHLPLELTHM), and 158–183 (QLHQLELSHNAINCSCQTLEVRNWLV). N-linked (GlcNAc...) asparagine glycosylation is found at N145 and N170. The 33-residue stretch at 184-216 (ERIVYMEHPVVCSYPLEFRGRSWLQLKQDEICK) folds into the LRRCT domain. 3 disordered regions span residues 264–285 (AKKVRSPQIPLPSDQVEGSGDL), 298–317 (TVAEPEAAESQLVDAAASPS), and 325–385 (KDED…TVFS). Over residues 347–372 (SKVKITSEDDIDSDGKPEESDVRPLE) the composition is skewed to basic and acidic residues. Residues 374-385 (PENSENPDTVFS) are compositionally biased toward polar residues. The helical transmembrane segment at 452 to 472 (IYYLLAVIGLIVVGLVLFVAI) threads the bilayer. The Cytoplasmic segment spans residues 473–677 (KRCKYDSNAA…EPTHQVINGH (205 aa)). Disordered regions lie at residues 502–523 (LGKPLHKNGHGNGQEHSPLIGE) and 539–677 (NGEA…INGH). The segment covering 595–607 (AQQQQLAEQNNNE) has biased composition (low complexity).

In terms of assembly, interacts with dome; the interaction promotes internalization of dome and its subsequent lysosomal degradation. In adult intestine, expressed in both small progenitor cells and large nuclei enterocytes (at protein level). During embryogenesis, restricted to the developing trachea.

The protein localises to the cell membrane. Functionally, plays a role in negative regulation of the JAK/STAT pathway by binding to the receptor dome and promoting its internalization for subsequent lysosomal degradation, thereby reducing JAK/STAT signaling. The sequence is that of Protein windpipe from Drosophila melanogaster (Fruit fly).